The following is an 83-amino-acid chain: Toxin TdNa5 (83 aa).

An N-terminal signal peptide occupies residues 1–20 (MKTIIFFIACLMLIDVVVES). The region spanning 21 to 82 (KDGYIIEHRG…IFDSNNNKCG (62 aa)) is the LCN-type CS-alpha/beta domain. Intrachain disulfides connect C31-C81, C35-C57, C43-C62, and C47-C64. C81 is modified (cysteine amide).

Belongs to the long (4 C-C) scorpion toxin superfamily. Sodium channel inhibitor family. Beta subfamily. In terms of tissue distribution, expressed by the venom gland.

The protein resides in the secreted. Inhibits the sodium currents (Nav) in an apparent irreversible manner. Produces small depolarization and induces repetitive firing in squid axons. Is specific for arthropods (crickets, triatomides, crabs and squids), but is non-toxic to mice. Shows antibacterial activity against both Gram-positive and Gram-negative bacteria. This is Toxin TdNa5 from Tityus discrepans (Venezuelan scorpion).